The following is a 273-amino-acid chain: Glutamate racemase (273 aa).

Substrate contacts are provided by residues 9 to 10 (DS) and 41 to 42 (YG). Cys-73 acts as the Proton donor/acceptor in catalysis. Position 74–75 (74–75 (NT)) interacts with substrate. The active-site Proton donor/acceptor is Cys-183. 184 to 185 (TH) contacts substrate.

It belongs to the aspartate/glutamate racemases family.

The catalysed reaction is L-glutamate = D-glutamate. The protein operates within cell wall biogenesis; peptidoglycan biosynthesis. Its function is as follows. Provides the (R)-glutamate required for cell wall biosynthesis. In Shewanella oneidensis (strain ATCC 700550 / JCM 31522 / CIP 106686 / LMG 19005 / NCIMB 14063 / MR-1), this protein is Glutamate racemase.